Reading from the N-terminus, the 447-residue chain is Methylenetetrahydrofolate--tRNA-(uracil-5-)-methyltransferase TrmFO (447 aa).

8–13 (GGGLAG) serves as a coordination point for FAD. The interval 398 to 421 (NWGLVPAPPKRENGRRLGRQERRR) is disordered. Residues 406–417 (PKRENGRRLGRQ) show a composition bias toward basic and acidic residues.

The protein belongs to the MnmG family. TrmFO subfamily. It depends on FAD as a cofactor.

It is found in the cytoplasm. The enzyme catalyses uridine(54) in tRNA + (6R)-5,10-methylene-5,6,7,8-tetrahydrofolate + NADH + H(+) = 5-methyluridine(54) in tRNA + (6S)-5,6,7,8-tetrahydrofolate + NAD(+). It carries out the reaction uridine(54) in tRNA + (6R)-5,10-methylene-5,6,7,8-tetrahydrofolate + NADPH + H(+) = 5-methyluridine(54) in tRNA + (6S)-5,6,7,8-tetrahydrofolate + NADP(+). Its function is as follows. Catalyzes the folate-dependent formation of 5-methyl-uridine at position 54 (M-5-U54) in all tRNAs. This chain is Methylenetetrahydrofolate--tRNA-(uracil-5-)-methyltransferase TrmFO, found in Rubrobacter xylanophilus (strain DSM 9941 / JCM 11954 / NBRC 16129 / PRD-1).